Reading from the N-terminus, the 267-residue chain is Interleukin-1 beta (267 aa).

Positions 1 to 114 (MAIVPEPAKE…ETCNDDFVCD (114 aa)) are excised as a propeptide.

It belongs to the IL-1 family. In terms of assembly, (Microbial infection) Interacts with African swine fever virus (ASFV) protein L83L. As to quaternary structure, monomer. In its precursor form, weakly interacts with full-length MEFV; the mature cytokine does not interact at all. Interacts with integrins ITGAV:ITGBV and ITGA5:ITGB1; integrin-binding is required for IL1B signaling. Interacts with cargo receptor TMED10; the interaction is direct and is required for the secretion of IL1B mature form. Interacts with HSP90AB1; the interaction facilitates cargo translocation into the ERGIC. Interacts with HSP90B1; the interaction facilitates cargo translocation into the ERGIC.

It localises to the cytoplasm. It is found in the cytosol. The protein localises to the secreted. The protein resides in the lysosome. Its subcellular location is the extracellular exosome. In terms of biological role, potent pro-inflammatory cytokine. Initially discovered as the major endogenous pyrogen, induces prostaglandin synthesis, neutrophil influx and activation, T-cell activation and cytokine production, B-cell activation and antibody production, and fibroblast proliferation and collagen production. Promotes Th17 differentiation of T-cells. Synergizes with IL12/interleukin-12 to induce IFNG synthesis from T-helper 1 (Th1) cells. Plays a role in angiogenesis by inducing VEGF production synergistically with TNF and IL6. Involved in transduction of inflammation downstream of pyroptosis: its mature form is specifically released in the extracellular milieu by passing through the gasdermin-D (GSDMD) pore. This Sus scrofa (Pig) protein is Interleukin-1 beta (IL1B).